The following is a 390-amino-acid chain: 8-amino-7-oxononanoate synthase (390 aa).

Residue Arg19 participates in substrate binding. Pyridoxal 5'-phosphate is bound at residue 106–107 (GY). Residue His131 participates in substrate binding. The pyridoxal 5'-phosphate site is built by Ser176, His204, and Thr233. Lys236 bears the N6-(pyridoxal phosphate)lysine mark. Residue Thr350 coordinates substrate.

Belongs to the class-II pyridoxal-phosphate-dependent aminotransferase family. BioF subfamily. As to quaternary structure, homodimer. It depends on pyridoxal 5'-phosphate as a cofactor.

It carries out the reaction 6-carboxyhexanoyl-[ACP] + L-alanine + H(+) = (8S)-8-amino-7-oxononanoate + holo-[ACP] + CO2. Its pathway is cofactor biosynthesis; biotin biosynthesis. In terms of biological role, catalyzes the decarboxylative condensation of pimeloyl-[acyl-carrier protein] and L-alanine to produce 8-amino-7-oxononanoate (AON), [acyl-carrier protein], and carbon dioxide. In Pseudomonas entomophila (strain L48), this protein is 8-amino-7-oxononanoate synthase.